The primary structure comprises 1396 residues: ATP-dependent helicase/nuclease subunit A (1396 aa).

A disordered region spans residues 1–25; the sequence is MNREALCHDDPIGHDRLRPDSIPRD. The UvrD-like helicase ATP-binding domain maps to 26 to 532; the sequence is PKWTDEQWQA…IDLAKNFRSR (507 aa). 47 to 54 contributes to the ATP binding site; sequence AAAGAGKT. Disordered stretches follow at residues 590 to 649 and 1171 to 1205; these read DADG…GQPT and HSPETPPSSETPPSLEIPPSLETPPSLETQTPSPD. Positions 615 to 920 constitute a UvrD-like helicase C-terminal domain; that stretch reads HKNIAKAGES…RIMSIHKSKG (306 aa). The span at 1181-1199 shows a compositional bias: low complexity; sequence TPPSLEIPPSLETPPSLET.

This sequence belongs to the helicase family. AddA subfamily. Heterodimer of AddA and AddB/RexB. Mg(2+) serves as cofactor.

It catalyses the reaction Couples ATP hydrolysis with the unwinding of duplex DNA by translocating in the 3'-5' direction.. The enzyme catalyses ATP + H2O = ADP + phosphate + H(+). Functionally, the heterodimer acts as both an ATP-dependent DNA helicase and an ATP-dependent, dual-direction single-stranded exonuclease. Recognizes the chi site generating a DNA molecule suitable for the initiation of homologous recombination. The AddA nuclease domain is required for chi fragment generation; this subunit has the helicase and 3' -&gt; 5' nuclease activities. This chain is ATP-dependent helicase/nuclease subunit A, found in Heliobacterium modesticaldum (strain ATCC 51547 / Ice1).